The primary structure comprises 315 residues: Eukaryotic translation initiation factor 2 subunit 1 (315 aa).

The S1 motif domain occupies 17-88 (EDVVMVNVRS…EKGYIDLSKR (72 aa)). S49 and S52 each carry phosphoserine. The segment at 292–315 (RLERENAEVDGDDDAEEMEAKTED) is disordered. Acidic residues predominate over residues 299 to 308 (EVDGDDDAEE).

The protein belongs to the eIF-2-alpha family. In terms of assembly, eukaryotic translation initiation factor 2 eIF2 is a heterotrimeric complex composed of an alpha (EIF2S1), a beta (EIF2S2) and a gamma (EIF2S3) chain. Phosphorylation at Ser-49 and Ser-52 stabilizes the eIF-2/GDP/eIF2B complex and prevents GDP/GTP exchange reaction, thus impairing the recycling of eIF-2 between successive rounds of initiation and leading to global inhibition of translation, while concomitantly initiating the preferential translation of integrated stress response (ISR)-specific mRNAs.

It localises to the cytoplasm. The protein resides in the stress granule. The protein localises to the cytosol. Activity is regulated by phosphorylation at Ser-49 and Ser-52, which stabilizes the eIF2/GDP/eIF2B complex and prevents the eIF2B-mediated exchange of GDP for GTP, thereby preventing the formation of the 43S pre-initiation complex (43S PIC). This results in the global attenuation of 5' cap-dependent protein synthesis and concomitant translation of ISR-specific mRNAs that contain a short upstream open reading frame (uORF) in their 5' UTR. Functionally, member of the eIF2 complex that functions in the early steps of protein synthesis by forming a ternary complex with GTP and initiator tRNA. This complex binds to a 40S ribosomal subunit, followed by mRNA binding to form a 43S pre-initiation complex. Junction of the 60S ribosomal subunit to form the 80S initiation complex is preceded by hydrolysis of the GTP bound to eIF2 and release of an eIF2-GDP binary complex. In order for eIF2 to recycle and catalyze another round of initiation, the GDP bound to eIF2 must exchange with GTP by way of a reaction catalyzed by eIF2B. EIF2S1/eIF2-alpha is a key component of the integrated stress response (ISR), required for adaptation to various stress: phosphorylation by metabolic-stress sensing protein kinases (EIF2AK1/HRI, EIF2AK2/PKR, EIF2AK3/PERK and EIF2AK4/GCN2) in response to stress converts EIF2S1/eIF2-alpha in a global protein synthesis inhibitor, leading to a attenuation of cap-dependent translation, while concomitantly initiating the preferential translation of ISR-specific mRNAs, such as the transcriptional activators ATF4 and QRICH1. The polypeptide is Eukaryotic translation initiation factor 2 subunit 1 (EIF2S1) (Gallus gallus (Chicken)).